The primary structure comprises 218 residues: Peptide methionine sulfoxide reductase MsrA (218 aa).

Cysteine 57 is a catalytic residue.

This sequence belongs to the MsrA Met sulfoxide reductase family.

It carries out the reaction L-methionyl-[protein] + [thioredoxin]-disulfide + H2O = L-methionyl-(S)-S-oxide-[protein] + [thioredoxin]-dithiol. It catalyses the reaction [thioredoxin]-disulfide + L-methionine + H2O = L-methionine (S)-S-oxide + [thioredoxin]-dithiol. Has an important function as a repair enzyme for proteins that have been inactivated by oxidation. Catalyzes the reversible oxidation-reduction of methionine sulfoxide in proteins to methionine. This is Peptide methionine sulfoxide reductase MsrA from Brucella melitensis biotype 1 (strain ATCC 23456 / CCUG 17765 / NCTC 10094 / 16M).